Reading from the N-terminus, the 162-residue chain is Anthrone oxygenase nsrD (162 aa).

A run of 3 helical transmembrane segments spans residues 17–37 (FLSG…LDTI), 54–74 (GSIY…YVAL), and 86–106 (PYVL…WVMV). N109 carries an N-linked (GlcNAc...) asparagine glycan. A helical transmembrane segment spans residues 130–150 (LVVKWAWLHVVRSLYPLFGAF).

This sequence belongs to the anthrone oxygenase family.

The protein localises to the membrane. The enzyme catalyses emodin anthrone + O2 = emodin + H2O + H(+). The protein operates within secondary metabolite biosynthesis. Functionally, anthrone oxygenase; part of the gene cluster that mediates the biosynthesis of the tetrahydroxanthone dimer neosartorin, which exhibits antibacterial activity. The two different monomeric units appear to be synthesized by the same set of enzymes, among which the Baeyer-Villiger monooxygenase nsrF is the key enzyme for the divergence of the biosynthetic routes. The pathway begins with the synthesis of atrochrysone thioester by the polyketide synthase nsrB. The atrochrysone carboxyl ACP thioesterase nsrC then breaks the thioester bond and releases the atrochrysone carboxylic acid from AacuL. Atrochrysone carboxylic acid is decarboxylated by the decarboxylase nsrE, and oxidized by the anthrone oxygenase nsrD to yield emodin. Emodin is then reduced to emodin hydroquinone by the oxidoreductase nsrR. A-ring reduction by the short chain dehydrogenase nsrJ, dehydration by the scytalone dehydratase-like protein nsrI and probable spontaneous re-oxidation, results in overall deoxygenation to chrysophanol. The Baeyer-Villiger monooxygenase nsrF accepts chrysophanol as a substrate to insert one oxygen atom at two different positions to yield the precursors of both monomric units. NsrF is promiscuous/flexible in interacting with the 2 (non methylated and methylated) aromatic rings of chrysophanol, thus diverging the biosynthetic pathway at this point. After the hydrolysis of the lactones, methylesterification by the methyltransferase nsrG yields respectively moniliphenone and 2,2',6'-trihydroxy-4-methyl-6-methoxya-cyldiphenylmethanone. The next steps are the hydroxylation by the FAD-dependent monooxygenase nsrK, followed by isomerization by the monooxygenase nsrQ. The short chain dehydrogenase/reductase nsrO then catalyzes the C-5 ketoreduction to give the xanthone skeleton of blennolide C and 5-acetylblennolide A. The acetyltransferase nsrL has a strict substrate specificity and uses only blennolide A but not blennolide C to yield 5-acetylblennolide A as the single-acetylated product. In the final step of the biosynthesis, the heterodimerization of the 2 xanthones, blennolide C and 5-acetylblennolide A, is catalyzed by the cytochrome P450 monooxygenase nsrP. NsrP can utilize at least three different xanthones as its substrates to perform the dimerization reaction. In Aspergillus novofumigatus (strain IBT 16806), this protein is Anthrone oxygenase nsrD.